Consider the following 250-residue polypeptide: 1-(5-phosphoribosyl)-5-[(5-phosphoribosylamino)methylideneamino] imidazole-4-carboxamide isomerase (250 aa).

The active-site Proton acceptor is the aspartate 8. Catalysis depends on aspartate 131, which acts as the Proton donor.

This sequence belongs to the HisA/HisF family.

Its subcellular location is the cytoplasm. The enzyme catalyses 1-(5-phospho-beta-D-ribosyl)-5-[(5-phospho-beta-D-ribosylamino)methylideneamino]imidazole-4-carboxamide = 5-[(5-phospho-1-deoxy-D-ribulos-1-ylimino)methylamino]-1-(5-phospho-beta-D-ribosyl)imidazole-4-carboxamide. Its pathway is amino-acid biosynthesis; L-histidine biosynthesis; L-histidine from 5-phospho-alpha-D-ribose 1-diphosphate: step 4/9. The chain is 1-(5-phosphoribosyl)-5-[(5-phosphoribosylamino)methylideneamino] imidazole-4-carboxamide isomerase from Paraburkholderia xenovorans (strain LB400).